The chain runs to 187 residues: MFIIAGLGNPGQEYENTRHNAGFMVVDELAKKHGILITKRKFKSLVGEGEILGVKVLLLKPQTYMNLSGTAVQEAVSFYKLPLSRLVVVYDDLDLPLGKIRLRLKGSAGGHRGMGSIISCLGSEEIPRLKIGIGRPAVGDVKDYVLQPFTGAEREILEPTLKLAAEAITVALTEGFNKAMTDFNRGG.

Tyrosine 14 contributes to the tRNA binding site. The active-site Proton acceptor is the histidine 19. Residues tyrosine 64 and asparagine 66 each coordinate tRNA.

It belongs to the PTH family. Monomer.

It localises to the cytoplasm. It catalyses the reaction an N-acyl-L-alpha-aminoacyl-tRNA + H2O = an N-acyl-L-amino acid + a tRNA + H(+). In terms of biological role, hydrolyzes ribosome-free peptidyl-tRNAs (with 1 or more amino acids incorporated), which drop off the ribosome during protein synthesis, or as a result of ribosome stalling. Catalyzes the release of premature peptidyl moieties from peptidyl-tRNA molecules trapped in stalled 50S ribosomal subunits, and thus maintains levels of free tRNAs and 50S ribosomes. The protein is Peptidyl-tRNA hydrolase of Carboxydothermus hydrogenoformans (strain ATCC BAA-161 / DSM 6008 / Z-2901).